Here is a 428-residue protein sequence, read N- to C-terminus: MAKTVAYFYDPDVGNFHYGAGHPMKPHRLALTHSLVLHYGLYKKMIVFKPYQASQHDMCRFHSEDYIDFLQRVSPNNMQGFTKSLNAFNVGDDCPVFPGLFEFCSRYTGASLQGATQLNNKICDIAINWAGGLHHAKKFEASGFCYVNDIVIGILELLKYHPRVLYIDIDIHHGDGVQEAFYLTDRVMTVSFHKYGNYFFPGTGDMYEVGAESGRYYALNVPLRDGIDDQSYKHLFQPVINQVVDYYQPTCIVLQCGADSLGRDRLGCFNLSIRGHGECVEYVKSFNIPLLVLGGGGYTVRNVARCWTYETSLLVDEAISEELPYSEYFEYFAPDFTLHPDVSTRIENQNSRQYLDQIRQTIFENLKMLNHAPSVQIHDVPSDLLSYDRTDEPDPEERGSEENYSRPEAANEFYDGDHDNDKESDVEI.

The segment at Lys3 to Asp316 is histone deacetylase. 1D-myo-inositol 1,4,5,6-tetrakisphosphate-binding residues include His17, Gly21, and Lys25. His135 is a catalytic residue. Residues Asp170, His172, and Asp259 each coordinate Zn(2+). Arg265 serves as a coordination point for 1D-myo-inositol 1,4,5,6-tetrakisphosphate. The segment at Leu385–Ile428 is disordered. Basic and acidic residues-rich tracts occupy residues Ser386 to Ser405 and Asp415 to Ile428.

The protein belongs to the histone deacetylase family. HD type 1 subfamily.

The protein resides in the nucleus. The protein localises to the chromosome. Its subcellular location is the cytoplasm. It is found in the cytosol. The catalysed reaction is N(6)-acetyl-L-lysyl-[histone] + H2O = L-lysyl-[histone] + acetate. The enzyme catalyses N(6)-acetyl-L-lysyl-[protein] + H2O = L-lysyl-[protein] + acetate. It carries out the reaction N(6)-(2E)-butenoyl-L-lysyl-[protein] + H2O = (2E)-2-butenoate + L-lysyl-[protein]. It catalyses the reaction N(6)-(2-hydroxyisobutanoyl)-L-lysyl-[protein] + H2O = 2-hydroxy-2-methylpropanoate + L-lysyl-[protein]. The catalysed reaction is N(6)-[(S)-lactoyl]-L-lysyl-[protein] + H2O = (S)-lactate + L-lysyl-[protein]. With respect to regulation, inositol tetraphosphate (1D-myo-inositol 1,4,5,6-tetrakisphosphate) promotes the histone deacetylase activity by acting as an intermolecular glue between HDAC3 and N-Cor repressor complex components. Its function is as follows. Histone deacetylase that catalyzes the deacetylation of lysine residues on the N-terminal part of the core histones (H2A, H2B, H3 and H4), and some other non-histone substrates. Histone deacetylation gives a tag for epigenetic repression and plays an important role in transcriptional regulation, cell cycle progression and developmental events. Histone deacetylases act via the formation of large multiprotein complexes, such as N-Cor repressor complex, which activate the histone deacetylase activity. Participates in the BCL6 transcriptional repressor activity by deacetylating the H3 'Lys-27' (H3K27) on enhancer elements, antagonizing EP300 acetyltransferase activity and repressing proximal gene expression. Also functions as a deacetylase for non-histone targets. In addition to protein deacetylase activity, also acts as a protein-lysine deacylase by recognizing other acyl groups: catalyzes removal of (2E)-butenoyl (crotonyl), lactoyl (lactyl) and 2-hydroxyisobutanoyl (2-hydroxyisobutyryl) acyl groups from lysine residues, leading to protein decrotonylation, delactylation and de-2-hydroxyisobutyrylation, respectively. In Gallus gallus (Chicken), this protein is Histone deacetylase 3 (HDAC3).